A 459-amino-acid polypeptide reads, in one-letter code: MKSVEQYRNQKVLVLGLAKSGVNAARLLHKLGAFVTVNDKKKFDENPDAQELLSDGIKVITGGHPLSLLDEDFKVVVKNPGIPYSNPIVSGAQEKGIPVITEVELASQILAGELIGVTGTNGKTTTTTMITMMLNQRTNAGKAYVAGNIGVPASAIAQKATAADTMVTELSSFMLCGIQTLHPHIAVITNIYSTHLDYHGSRENYVKAKMRITMNQTANDYLVINWDSEEWRQLSKQSQATVVPFSRQANTKDGAYEEAGKLYFKDEYIMDAADIRIPGDHNVENALAAIAVAKLQAVPTAGIVQVLKTFTGVRHRTQYVETYQDRQFYNDSKATNLVSTEMALKGFDQPVILLAGGLDRGNTFEKLAPALKAHVKTLIVFGETAEKMADAGRLAGIQDIEFTDNCETAVPIAWQHSQAGDIIMLSPACASWDQYPNFEVRGDRFIKAIEQLTGKAEEN.

G119–T125 serves as a coordination point for ATP.

It belongs to the MurCDEF family.

The protein localises to the cytoplasm. It catalyses the reaction UDP-N-acetyl-alpha-D-muramoyl-L-alanine + D-glutamate + ATP = UDP-N-acetyl-alpha-D-muramoyl-L-alanyl-D-glutamate + ADP + phosphate + H(+). It functions in the pathway cell wall biogenesis; peptidoglycan biosynthesis. In terms of biological role, cell wall formation. Catalyzes the addition of glutamate to the nucleotide precursor UDP-N-acetylmuramoyl-L-alanine (UMA). The protein is UDP-N-acetylmuramoylalanine--D-glutamate ligase of Lactiplantibacillus plantarum (strain ATCC BAA-793 / NCIMB 8826 / WCFS1) (Lactobacillus plantarum).